The primary structure comprises 176 residues: CDP-archaeol synthase (176 aa).

5 consecutive transmembrane segments (helical) span residues 12 to 32 (FIYWFLKYYLSPMIANASPVL), 60 to 80 (GFYVGVLMGFLTSIGIGIILC), 85 to 105 (ILIGLGSSIFALIGDLLGSFI), 118 to 138 (PIIDQLDFALMATLYYYFLGI), and 141 to 161 (FISYPLYILYSLIIILALHII).

This sequence belongs to the CDP-archaeol synthase family. It depends on Mg(2+) as a cofactor.

Its subcellular location is the cell membrane. It catalyses the reaction 2,3-bis-O-(geranylgeranyl)-sn-glycerol 1-phosphate + CTP + H(+) = CDP-2,3-bis-O-(geranylgeranyl)-sn-glycerol + diphosphate. The protein operates within membrane lipid metabolism; glycerophospholipid metabolism. Catalyzes the formation of CDP-2,3-bis-(O-geranylgeranyl)-sn-glycerol (CDP-archaeol) from 2,3-bis-(O-geranylgeranyl)-sn-glycerol 1-phosphate (DGGGP) and CTP. This reaction is the third ether-bond-formation step in the biosynthesis of archaeal membrane lipids. This chain is CDP-archaeol synthase, found in Staphylothermus marinus (strain ATCC 43588 / DSM 3639 / JCM 9404 / F1).